Here is a 453-residue protein sequence, read N- to C-terminus: MTTDTIVAQATAPGRGGVGIIRVSGDKASDVAMAVLGHLPKVRYADYCDFKAADGAVIDQGIALYFKGPNSFTGEDVLELQGHGGQVVLDMLIKRVMDVDGVRIAKPGEFSEQAFMNDKLDLTQAEAIADLIDATSEQAAKSALNSLQGEFSTQVHELVDQVTNLRLYVEAAIDFPDEEVDFLSDGKIAASLGKIITKLDSVQSSAKQGAIIREGMKVVIAGRPNAGKSSLLNALAGKESAIVTEIAGTTRDVLREHIHLDGMPLHIIDTAGLRDTTDTVEQIGIERAWAEIETADQVLFMVDGTTTDAVDPHDIWPDFIDRLPKNLGVTVVRNKADLTGESLDATDEQGHKVFRLSAKTGSGVDELKAHLKSLMGYQSNLEGGFLARRRHLEALELASSHLALGQEQLEVYQAGELLAEELRMCQLALSEITGKFTSDDLLGKIFSSFCIGK.

Positions 22, 79, and 119 each coordinate (6S)-5-formyl-5,6,7,8-tetrahydrofolate. Residues 215 to 376 form the TrmE-type G domain; the sequence is GMKVVIAGRP…LKAHLKSLMG (162 aa). K(+) is bound at residue asparagine 225. Residues 225-230, 244-250, 269-272, and 334-337 each bind GTP; these read NAGKSS, TEIAGTT, DTAG, and NKAD. Serine 229 provides a ligand contact to Mg(2+). Positions 244, 246, and 249 each coordinate K(+). Threonine 250 is a binding site for Mg(2+). Position 453 (lysine 453) interacts with (6S)-5-formyl-5,6,7,8-tetrahydrofolate.

This sequence belongs to the TRAFAC class TrmE-Era-EngA-EngB-Septin-like GTPase superfamily. TrmE GTPase family. In terms of assembly, homodimer. Heterotetramer of two MnmE and two MnmG subunits. K(+) is required as a cofactor.

The protein resides in the cytoplasm. Exhibits a very high intrinsic GTPase hydrolysis rate. Involved in the addition of a carboxymethylaminomethyl (cmnm) group at the wobble position (U34) of certain tRNAs, forming tRNA-cmnm(5)s(2)U34. The polypeptide is tRNA modification GTPase MnmE (Shewanella loihica (strain ATCC BAA-1088 / PV-4)).